An 830-amino-acid polypeptide reads, in one-letter code: Periplasmic nitrate reductase (830 aa).

The tat-type signal signal peptide spans 1 to 31; that stretch reads MKLSRRDFMKANAAVAAAAAAGMTIPTVAKA. A 4Fe-4S Mo/W bis-MGD-type domain is found at 39-95; it reads IKWDKAPCRFCGTGCGVLVGTQNGRIVASQGDPDSPVNRGLNCIKGYFLPKIMYGKD. The [4Fe-4S] cluster site is built by cysteine 46, cysteine 49, cysteine 53, and cysteine 81. Mo-bis(molybdopterin guanine dinucleotide) contacts are provided by residues lysine 83, glutamine 150, asparagine 175, cysteine 179, 212 to 219, 243 to 247, 262 to 264, methionine 372, glutamine 376, asparagine 482, 508 to 509, lysine 531, aspartate 558, and 718 to 727; these read WGSNMAEM, STYEH, QTD, SD, and TGRVLEHWHT. Phenylalanine 794 serves as a coordination point for substrate. Mo-bis(molybdopterin guanine dinucleotide) contacts are provided by asparagine 802 and lysine 819.

It belongs to the prokaryotic molybdopterin-containing oxidoreductase family. NasA/NapA/NarB subfamily. In terms of assembly, component of the periplasmic nitrate reductase NapAB complex composed of NapA and NapB. Requires [4Fe-4S] cluster as cofactor. Mo-bis(molybdopterin guanine dinucleotide) is required as a cofactor. Post-translationally, predicted to be exported by the Tat system. The position of the signal peptide cleavage has not been experimentally proven.

The protein localises to the periplasm. It carries out the reaction 2 Fe(II)-[cytochrome] + nitrate + 2 H(+) = 2 Fe(III)-[cytochrome] + nitrite + H2O. Its function is as follows. Catalytic subunit of the periplasmic nitrate reductase complex NapAB. Receives electrons from NapB and catalyzes the reduction of nitrate to nitrite. In Yersinia pseudotuberculosis serotype IB (strain PB1/+), this protein is Periplasmic nitrate reductase.